Consider the following 489-residue polypeptide: Otolin-1-A (489 aa).

The first 23 residues, 1–23 (MPNILHPFIIIMTLLVVATGNQA), serve as a signal peptide directing secretion. A disordered region spans residues 27 to 57 (KTTQWPRMKPTKKPPPRDEGPSKLGSISTTV). N-linked (GlcNAc...) asparagine glycosylation occurs at N109. A disordered region spans residues 133-335 (GPVGEKGLPG…PGMKGTRGLK (203 aa)). The segment covering 142–151 (GIPGGKGEMG) has biased composition (gly residues). Collagen-like domains are found at residues 145–204 (GGKG…KGDK), 205–255 (GDTG…KGDK), and 264–323 (GQKG…PGQR). Residues 192–206 (QGEKGESGPKGDKGD) are compositionally biased toward basic and acidic residues. N225 carries N-linked (GlcNAc...) asparagine glycosylation. Positions 226–235 (GTKGGMGEPG) are enriched in gly residues. Residues 248–257 (IKGEKGDKGD) are compositionally biased toward basic and acidic residues. An N-linked (GlcNAc...) asparagine glycan is attached at N287. Low complexity predominate over residues 290–310 (DGLPGSKGPKGDPGPLSKQGE). The C1q domain maps to 351–488 (AVQKRSAFSV…GFLLYADATK (138 aa)). 2 N-linked (GlcNAc...) asparagine glycosylation sites follow: N391 and N396.

It belongs to the OTOL1 family. As to quaternary structure, homooligomer; disulfide-linked; probably forms homotrimers. Interacts with otomp.

It is found in the secreted. The protein localises to the extracellular space. Its subcellular location is the extracellular matrix. Functionally, collagen-like protein, which provides an organic scaffold for otoliths onto the sensory epithelium of the inner ear. Acts as a scaffold for biomineralization by sequestering calcium. This Danio rerio (Zebrafish) protein is Otolin-1-A (otol1a).